The chain runs to 479 residues: ATP synthase subunit beta (479 aa).

ATP is bound at residue 153–160 (GGAGVGKT).

It belongs to the ATPase alpha/beta chains family. F-type ATPases have 2 components, CF(1) - the catalytic core - and CF(0) - the membrane proton channel. CF(1) has five subunits: alpha(3), beta(3), gamma(1), delta(1), epsilon(1). CF(0) has three main subunits: a(1), b(2) and c(9-12). The alpha and beta chains form an alternating ring which encloses part of the gamma chain. CF(1) is attached to CF(0) by a central stalk formed by the gamma and epsilon chains, while a peripheral stalk is formed by the delta and b chains.

It localises to the cell membrane. The enzyme catalyses ATP + H2O + 4 H(+)(in) = ADP + phosphate + 5 H(+)(out). Produces ATP from ADP in the presence of a proton gradient across the membrane. The catalytic sites are hosted primarily by the beta subunits. The chain is ATP synthase subunit beta from Lactobacillus delbrueckii subsp. bulgaricus (strain ATCC 11842 / DSM 20081 / BCRC 10696 / JCM 1002 / NBRC 13953 / NCIMB 11778 / NCTC 12712 / WDCM 00102 / Lb 14).